The following is a 310-amino-acid chain: Putative S-adenosyl-L-methionine-dependent methyltransferase MUL_2766 (310 aa).

Residues D131 and D160–L161 contribute to the S-adenosyl-L-methionine site.

It belongs to the UPF0677 family.

In terms of biological role, exhibits S-adenosyl-L-methionine-dependent methyltransferase activity. The chain is Putative S-adenosyl-L-methionine-dependent methyltransferase MUL_2766 from Mycobacterium ulcerans (strain Agy99).